Reading from the N-terminus, the 166-residue chain is Phospholipase A2 inhibitor clone 05 (166 aa).

Residues 1-19 (MRLILLSSLLLLGIFLADG) form the signal peptide. A C-type lectin domain is found at 46–161 (LKGAFLTVHR…CDDNLLVVCE (116 aa)). Intrachain disulfides connect C83–C160 and C138–C152. N122 carries an N-linked (GlcNAc...) asparagine glycan.

The protein belongs to the alpha-type phospholipase A2 inhibitor family. As to quaternary structure, homotrimer; non-covalently linked. Expressed by the liver.

Its subcellular location is the secreted. This phospholipase A2 inhibitor binds directly phospholipase A2 in the presence or absence of calcium. The chain is Phospholipase A2 inhibitor clone 05 from Bothrops moojeni (Lance-headed viper).